The primary structure comprises 1167 residues: White collar 1 protein (1167 aa).

Disordered regions lie at residues Met1 to Gly91 and Ser307 to Gln355. The segment covering Gln21–Gln57 has biased composition (low complexity). 2 stretches are compositionally biased toward polar residues: residues Thr70–Gly91 and Ser307–Ile325. Over residues Val335–Pro348 the composition is skewed to low complexity. The PAS 1 domain occupies Lys381–Val452. An S-4a-FMN cysteine modification is found at Cys428. Positions Leu469–Cys508 constitute a PAC 1 domain. The PAS 2 domain maps to Lys574–Thr644. Residues Phe650 to Leu691 form the PAC 2 domain. A PAS 3 domain is found at Arg693–Lys763. The span at Met849–Met861 shows a compositional bias: low complexity. Disordered regions lie at residues Met849 to Gln872, Lys918 to Asn952, Gln966 to Thr1047, and Val1060 to Val1167. The GATA-type zinc-finger motif lies at Cys934 to Cys959. Polar residues predominate over residues Gly968–Arg977. Positions Lys986 to Ser995 are enriched in low complexity. Residues Asp1004–Ser1033 show a composition bias toward polar residues. Low complexity-rich tracts occupy residues Ala1036 to Thr1047 and Gln1104 to Gln1128.

As to quaternary structure, heterodimer of wc-1 and wc-2. FMN binds covalently to cysteine after exposure to blue light and is reversed in the dark.

The protein resides in the nucleus. Its function is as follows. May function as a transcription factor involved in light regulation. Binds and affects blue light regulation of the al-3 gene. Wc-1 and wc-2 proteins interact via homologous PAS domains, bind to promoters of light regulated genes such as frq, and activate transcription. The chain is White collar 1 protein (wc-1) from Neurospora crassa (strain ATCC 24698 / 74-OR23-1A / CBS 708.71 / DSM 1257 / FGSC 987).